The primary structure comprises 291 residues: Elongation factor Ts (291 aa).

The interval 81–84 is involved in Mg(2+) ion dislocation from EF-Tu; sequence TDFV. Residues 271 to 291 are disordered; that stretch reads EGKEKKDESFADEVMAQVRDS.

This sequence belongs to the EF-Ts family.

Its subcellular location is the cytoplasm. Functionally, associates with the EF-Tu.GDP complex and induces the exchange of GDP to GTP. It remains bound to the aminoacyl-tRNA.EF-Tu.GTP complex up to the GTP hydrolysis stage on the ribosome. The chain is Elongation factor Ts from Halorhodospira halophila (strain DSM 244 / SL1) (Ectothiorhodospira halophila (strain DSM 244 / SL1)).